Here is a 72-residue protein sequence, read N- to C-terminus: Translation initiation factor IF-1 (72 aa).

The region spanning 1–72 is the S1-like domain; that stretch reads MAKEEAIEIE…SKGRITYRYK (72 aa).

The protein belongs to the IF-1 family. As to quaternary structure, component of the 30S ribosomal translation pre-initiation complex which assembles on the 30S ribosome in the order IF-2 and IF-3, IF-1 and N-formylmethionyl-tRNA(fMet); mRNA recruitment can occur at any time during PIC assembly.

The protein resides in the cytoplasm. Functionally, one of the essential components for the initiation of protein synthesis. Stabilizes the binding of IF-2 and IF-3 on the 30S subunit to which N-formylmethionyl-tRNA(fMet) subsequently binds. Helps modulate mRNA selection, yielding the 30S pre-initiation complex (PIC). Upon addition of the 50S ribosomal subunit IF-1, IF-2 and IF-3 are released leaving the mature 70S translation initiation complex. The polypeptide is Translation initiation factor IF-1 (Chlorobium luteolum (strain DSM 273 / BCRC 81028 / 2530) (Pelodictyon luteolum)).